Reading from the N-terminus, the 321-residue chain is Methionyl-tRNA formyltransferase (321 aa).

111–114 (GLLP) contacts (6S)-5,6,7,8-tetrahydrofolate.

Belongs to the Fmt family.

It carries out the reaction L-methionyl-tRNA(fMet) + (6R)-10-formyltetrahydrofolate = N-formyl-L-methionyl-tRNA(fMet) + (6S)-5,6,7,8-tetrahydrofolate + H(+). Attaches a formyl group to the free amino group of methionyl-tRNA(fMet). The formyl group appears to play a dual role in the initiator identity of N-formylmethionyl-tRNA by promoting its recognition by IF2 and preventing the misappropriation of this tRNA by the elongation apparatus. This is Methionyl-tRNA formyltransferase from Chlamydia abortus (strain DSM 27085 / S26/3) (Chlamydophila abortus).